The chain runs to 100 residues: Enhancer of yellow 2 transcription factor (100 aa).

Belongs to the ENY2 family. As to quaternary structure, component of the nuclear pore complex (NPC)-associated AMEX complex (anchoring and mRNA export complex), composed of at least e(y)2 and xmas-2. Component of the SAGA transcription coactivator-HAT complexes, at least composed of Ada2b, e(y)2, Pcaf/Gcn5, Taf10 and Nipped-A/Trrap. Within the SAGA complex, e(y)2, Sgf11, and not/nonstop form an additional subcomplex of SAGA called the DUB module (deubiquitination module). Component of the THO complex, composed of at least e(y)2, HPR1, THO2, THOC5, THOC6 and THOC7. Interacts with e(y)1. Interacts with su(Hw) (via zinc fingers). Interacts with xmas-2; required for localization to the nuclear periphery. Interacts with the nuclear pore complex (NPC).

It is found in the nucleus. The protein localises to the nucleoplasm. Its subcellular location is the cytoplasm. In terms of biological role, involved in mRNA export coupled transcription activation by association with both the AMEX and the SAGA complexes. The SAGA complex is a multiprotein complex that activates transcription by remodeling chromatin and mediating histone acetylation and deubiquitination. Within the SAGA complex, participates in a subcomplex that specifically deubiquitinates histone H2B. The SAGA complex is recruited to specific gene promoters by activators, where it is required for transcription. Required for nuclear receptor-mediated transactivation. Involved in transcription elongation by recruiting the THO complex onto nascent mRNA. The AMEX complex functions in docking export-competent ribonucleoprotein particles (mRNPs) to the nuclear entrance of the nuclear pore complex (nuclear basket). AMEX participates in mRNA export and accurate chromatin positioning in the nucleus by tethering genes to the nuclear periphery. The protein is Enhancer of yellow 2 transcription factor of Drosophila ananassae (Fruit fly).